Here is a 316-residue protein sequence, read N- to C-terminus: Ribosomal RNA large subunit methyltransferase F (316 aa).

Positions 200–222 (EEANKSTSRKVSNLNPKEKKNTN) are disordered. A compositionally biased stretch (polar residues) spans 204–214 (KSTSRKVSNLN).

The protein belongs to the methyltransferase superfamily. METTL16/RlmF family.

Its subcellular location is the cytoplasm. The catalysed reaction is adenosine(1618) in 23S rRNA + S-adenosyl-L-methionine = N(6)-methyladenosine(1618) in 23S rRNA + S-adenosyl-L-homocysteine + H(+). In terms of biological role, specifically methylates the adenine in position 1618 of 23S rRNA. The protein is Ribosomal RNA large subunit methyltransferase F of Flavobacterium johnsoniae (strain ATCC 17061 / DSM 2064 / JCM 8514 / BCRC 14874 / CCUG 350202 / NBRC 14942 / NCIMB 11054 / UW101) (Cytophaga johnsonae).